The following is a 338-amino-acid chain: Ketol-acid reductoisomerase (NADP(+)) (338 aa).

One can recognise a KARI N-terminal Rossmann domain in the interval 1 to 181 (MKIYYDKDCN…GGGKAGIIET (181 aa)). NADP(+)-binding positions include 24-27 (YGSQ), Lys-47, Ser-50, Ser-52, and 82-85 (DEIQ). His-107 is an active-site residue. Gly-133 lines the NADP(+) pocket. The KARI C-terminal knotted domain occupies 182–327 (SFKEETETDL…ARLRSMMAWI (146 aa)). The Mg(2+) site is built by Asp-190, Glu-194, Glu-226, and Glu-230. Ser-251 is a binding site for substrate.

Belongs to the ketol-acid reductoisomerase family. Mg(2+) serves as cofactor.

It carries out the reaction (2R)-2,3-dihydroxy-3-methylbutanoate + NADP(+) = (2S)-2-acetolactate + NADPH + H(+). It catalyses the reaction (2R,3R)-2,3-dihydroxy-3-methylpentanoate + NADP(+) = (S)-2-ethyl-2-hydroxy-3-oxobutanoate + NADPH + H(+). Its pathway is amino-acid biosynthesis; L-isoleucine biosynthesis; L-isoleucine from 2-oxobutanoate: step 2/4. It participates in amino-acid biosynthesis; L-valine biosynthesis; L-valine from pyruvate: step 2/4. Functionally, involved in the biosynthesis of branched-chain amino acids (BCAA). Catalyzes an alkyl-migration followed by a ketol-acid reduction of (S)-2-acetolactate (S2AL) to yield (R)-2,3-dihydroxy-isovalerate. In the isomerase reaction, S2AL is rearranged via a Mg-dependent methyl migration to produce 3-hydroxy-3-methyl-2-ketobutyrate (HMKB). In the reductase reaction, this 2-ketoacid undergoes a metal-dependent reduction by NADPH to yield (R)-2,3-dihydroxy-isovalerate. In Geotalea uraniireducens (strain Rf4) (Geobacter uraniireducens), this protein is Ketol-acid reductoisomerase (NADP(+)).